Consider the following 96-residue polypeptide: uncharacterized protein (96 aa).

3 helical membrane passes run 2–22 (FIFN…ICYF), 38–58 (AGLK…TVML), and 68–88 (LTLA…QLIV).

The protein localises to the membrane. This is an uncharacterized protein from Schizosaccharomyces pombe (strain 972 / ATCC 24843) (Fission yeast).